Consider the following 174-residue polypeptide: Large ribosomal subunit protein uL16 (174 aa).

This sequence belongs to the universal ribosomal protein uL16 family.

This chain is Large ribosomal subunit protein uL16, found in Staphylothermus marinus (strain ATCC 43588 / DSM 3639 / JCM 9404 / F1).